The sequence spans 218 residues: Large ribosomal subunit protein uL3 (218 aa).

The segment at 127–167 is disordered; it reads GFSRGPMSHGSKNHREPGSTGAGTTPGRIYPGKRMAGRYGG.

Belongs to the universal ribosomal protein uL3 family. Part of the 50S ribosomal subunit. Forms a cluster with proteins L14 and L19.

In terms of biological role, one of the primary rRNA binding proteins, it binds directly near the 3'-end of the 23S rRNA, where it nucleates assembly of the 50S subunit. In Prochlorococcus marinus (strain MIT 9303), this protein is Large ribosomal subunit protein uL3.